Consider the following 380-residue polypeptide: Succinyl-diaminopimelate desuccinylase (380 aa).

A Zn(2+)-binding site is contributed by histidine 66. Aspartate 68 is an active-site residue. Aspartate 99 contributes to the Zn(2+) binding site. Catalysis depends on glutamate 135, which acts as the Proton acceptor. Positions 136, 164, and 350 each coordinate Zn(2+).

Belongs to the peptidase M20A family. DapE subfamily. Homodimer. The cofactor is Zn(2+). Co(2+) serves as cofactor.

The enzyme catalyses N-succinyl-(2S,6S)-2,6-diaminopimelate + H2O = (2S,6S)-2,6-diaminopimelate + succinate. The protein operates within amino-acid biosynthesis; L-lysine biosynthesis via DAP pathway; LL-2,6-diaminopimelate from (S)-tetrahydrodipicolinate (succinylase route): step 3/3. Its function is as follows. Catalyzes the hydrolysis of N-succinyl-L,L-diaminopimelic acid (SDAP), forming succinate and LL-2,6-diaminopimelate (DAP), an intermediate involved in the bacterial biosynthesis of lysine and meso-diaminopimelic acid, an essential component of bacterial cell walls. This Magnetococcus marinus (strain ATCC BAA-1437 / JCM 17883 / MC-1) protein is Succinyl-diaminopimelate desuccinylase.